The primary structure comprises 230 residues: Ribosomal RNA large subunit methyltransferase E (230 aa).

The segment covering 1-13 (MSGSGGKGGGRGG) has biased composition (gly residues). The disordered stretch occupies residues 1–22 (MSGSGGKGGGRGGLHVRVKTAK). S-adenosyl-L-methionine contacts are provided by Gly81, Trp83, Asp100, Asp116, and Asp140. The Proton acceptor role is filled by Lys180.

The protein belongs to the class I-like SAM-binding methyltransferase superfamily. RNA methyltransferase RlmE family.

Its subcellular location is the cytoplasm. The catalysed reaction is uridine(2552) in 23S rRNA + S-adenosyl-L-methionine = 2'-O-methyluridine(2552) in 23S rRNA + S-adenosyl-L-homocysteine + H(+). Specifically methylates the uridine in position 2552 of 23S rRNA at the 2'-O position of the ribose in the fully assembled 50S ribosomal subunit. This Sphingopyxis alaskensis (strain DSM 13593 / LMG 18877 / RB2256) (Sphingomonas alaskensis) protein is Ribosomal RNA large subunit methyltransferase E.